A 185-amino-acid chain; its full sequence is Ribosome-recycling factor (185 aa).

This sequence belongs to the RRF family.

Its subcellular location is the cytoplasm. Its function is as follows. Responsible for the release of ribosomes from messenger RNA at the termination of protein biosynthesis. May increase the efficiency of translation by recycling ribosomes from one round of translation to another. The sequence is that of Ribosome-recycling factor from Hamiltonella defensa subsp. Acyrthosiphon pisum (strain 5AT).